The primary structure comprises 367 residues: Glutamate 5-kinase (367 aa).

Residue K9 coordinates ATP. Positions 49, 136, and 148 each coordinate substrate. ATP-binding positions include 168 to 169 (TD) and 210 to 216 (TGGMKSK). One can recognise a PUA domain in the interval 276–350 (SGQIEIDAGA…GMQSQHIQAR (75 aa)).

This sequence belongs to the glutamate 5-kinase family.

The protein resides in the cytoplasm. The catalysed reaction is L-glutamate + ATP = L-glutamyl 5-phosphate + ADP. It participates in amino-acid biosynthesis; L-proline biosynthesis; L-glutamate 5-semialdehyde from L-glutamate: step 1/2. In terms of biological role, catalyzes the transfer of a phosphate group to glutamate to form L-glutamate 5-phosphate. The sequence is that of Glutamate 5-kinase from Bacillus cereus (strain ATCC 10987 / NRS 248).